Here is a 285-residue protein sequence, read N- to C-terminus: Integrin alpha-1 (285 aa).

Over 1–285 (ENMTFGTTLV…HYSQDWVMLG (285 aa)) the chain is Extracellular. N2, N40, N208, and N232 each carry an N-linked (GlcNAc...) asparagine glycan. The VWFA domain maps to 66–279 (IVLDGSNSIY…QAGFSAHYSQ (214 aa)).

The protein belongs to the integrin alpha chain family. Heterodimer of an alpha and a beta subunit. Alpha-1 associates with beta-1.

Its subcellular location is the membrane. Its function is as follows. Integrin alpha-1/beta-1 is a receptor for laminin and collagen. It recognizes the proline-hydroxylated sequence G-F-P-G-E-R in collagen. Involved in anchorage-dependent, negative regulation of EGF-stimulated cell growth. The protein is Integrin alpha-1 (ITGA1) of Gallus gallus (Chicken).